A 147-amino-acid polypeptide reads, in one-letter code: Transthyretin (147 aa).

Positions 1-20 are cleaved as a signal peptide; the sequence is MASFRLLLLCLAGLVFVSEA. Cys-30 carries the sulfocysteine modification. Lys-35 contributes to the L-thyroxine binding site. A 4-carboxyglutamate modification is found at Glu-62. Ser-72 is modified (phosphoserine). Glu-74 is an L-thyroxine binding site. N-linked (GlcNAc...) asparagine glycosylation occurs at Asn-118. Position 137 (Ser-137) interacts with L-thyroxine.

This sequence belongs to the transthyretin family. As to quaternary structure, homotetramer. Dimer of dimers. In the homotetramer, subunits assemble around a central channel that can accommodate two ligand molecules. Interacts with RBP4. In terms of processing, sulfonation of the reactive cysteine Cys-30 enhances the stability of the native conformation of TTR, avoiding misassembly of the protein leading to amyloid formation. Highly expressed in the choroid plexus.

It is found in the secreted. Thyroid hormone-binding protein. Probably transports thyroxine from the bloodstream to the brain. The sequence is that of Transthyretin (TTR) from Ovis aries (Sheep).